Here is a 193-residue protein sequence, read N- to C-terminus: Naphthalene 1,2-dioxygenase system, small oxygenase component (193 aa).

It belongs to the bacterial ring-hydroxylating dioxygenase beta subunit family. The naphthalene dioxygenase (NDO) multicomponent enzyme system is composed of an electron transfer component and a dioxygenase component (iron sulfur protein (ISP)). The electron transfer component is composed of a ferredoxin reductase (NdoR) and a ferredoxin (NdoA), and the dioxygenase component is formed of a heterohexamer (trimer of heterodimers) of three large alpha subunits (NdoB) and three small beta subunits (NdoC).

It participates in aromatic compound metabolism; naphthalene degradation. Its function is as follows. Component of the naphthalene dioxygenase (NDO) multicomponent enzyme system which catalyzes the incorporation of both atoms of molecular oxygen into naphthalene to form cis-(1R,2S)-dihydroxy-1,2-dihydronaphthalene. The beta subunit seems to have a structural role in the holoenzyme. In Pseudomonas aeruginosa, this protein is Naphthalene 1,2-dioxygenase system, small oxygenase component.